The following is a 222-amino-acid chain: V-type ATP synthase subunit D (222 aa).

The protein belongs to the V-ATPase D subunit family.

Produces ATP from ADP in the presence of a proton gradient across the membrane. The protein is V-type ATP synthase subunit D of Clostridioides difficile (strain 630) (Peptoclostridium difficile).